We begin with the raw amino-acid sequence, 87 residues long: Small ribosomal subunit protein uS15 (87 aa).

Positions 1–19 (MDKAKKQELMAKHARHEGD) are enriched in basic and acidic residues. Residues 1–23 (MDKAKKQELMAKHARHEGDTGSP) form a disordered region.

The protein belongs to the universal ribosomal protein uS15 family. Part of the 30S ribosomal subunit. Forms a bridge to the 50S subunit in the 70S ribosome, contacting the 23S rRNA.

In terms of biological role, one of the primary rRNA binding proteins, it binds directly to 16S rRNA where it helps nucleate assembly of the platform of the 30S subunit by binding and bridging several RNA helices of the 16S rRNA. Forms an intersubunit bridge (bridge B4) with the 23S rRNA of the 50S subunit in the ribosome. In Clostridium botulinum (strain Loch Maree / Type A3), this protein is Small ribosomal subunit protein uS15.